The sequence spans 238 residues: Succinate dehydrogenase iron-sulfur subunit (238 aa).

In terms of domain architecture, 2Fe-2S ferredoxin-type spans 8 to 97; it reads YRYNPDVDDA…KIVIRPLPGL (90 aa). Positions 55, 60, and 75 each coordinate [2Fe-2S] cluster. The 4Fe-4S ferredoxin-type domain maps to 139 to 169; the sequence is QREKLDGLYECILCACCSTSCPSFWWNPDKF. Residues cysteine 149, cysteine 152, and cysteine 155 each contribute to the [4Fe-4S] cluster site. Position 159 (cysteine 159) interacts with [3Fe-4S] cluster. Tryptophan 164 contacts a ubiquinone. Residues cysteine 206 and cysteine 212 each coordinate [3Fe-4S] cluster. Cysteine 216 is a binding site for [4Fe-4S] cluster.

Belongs to the succinate dehydrogenase/fumarate reductase iron-sulfur protein family. As to quaternary structure, part of an enzyme complex containing four subunits: a flavoprotein, an iron-sulfur, cytochrome b-556, and a hydrophobic anchor protein. The complex forms trimers. Requires [2Fe-2S] cluster as cofactor. It depends on [3Fe-4S] cluster as a cofactor. [4Fe-4S] cluster is required as a cofactor.

Its subcellular location is the cell inner membrane. It catalyses the reaction a quinone + succinate = fumarate + a quinol. Its pathway is carbohydrate metabolism; tricarboxylic acid cycle; fumarate from succinate (bacterial route): step 1/1. In terms of biological role, two distinct, membrane-bound, FAD-containing enzymes are responsible for the catalysis of fumarate and succinate interconversion; the fumarate reductase is used in anaerobic growth, and the succinate dehydrogenase is used in aerobic growth. This Escherichia coli (strain K12) protein is Succinate dehydrogenase iron-sulfur subunit (sdhB).